A 580-amino-acid polypeptide reads, in one-letter code: YTH domain-containing family protein 2 (580 aa).

The segment at methionine 1–asparagine 45 is disordered. Position 2 is an N-acetylserine (serine 2). Phosphoserine is present on residues serine 2, serine 4, serine 5, serine 22, serine 39, and serine 196. The tract at residues serine 2–glutamate 385 is localization to mRNA processing bodies (P-bodies). The interval alanine 247–proline 388 is disordered. The span at alanine 291 to proline 317 shows a compositional bias: polar residues. The segment covering alanine 338–threonine 350 has biased composition (low complexity). The residue at position 360 (serine 360) is a Phosphoserine. Over residues serine 360–valine 372 the composition is skewed to gly residues. A compositionally biased stretch (polar residues) spans glycine 373–serine 384. Residues proline 386–lysine 580 are interaction with m6A-containing mRNAs. Serine 395 is modified (phosphoserine). A YTH domain is found at glycine 411–isoleucine 545. RNA is bound by residues lysine 417–tyrosine 419, aspartate 423, tryptophan 433–cysteine 434, asparagine 463, tryptophan 487, and tryptophan 492.

It belongs to the YTHDF family. YTHDF2 subfamily. Interacts with CNOT1; interaction is direct and promotes recruitment of the CCR4-NOT complex. Interacts with YTHDF3. Interacts with RIDA/HRSP12; interaction leads to recruitment of the ribonuclease P/MRP complex. Ubiquitinated by the SCF(SKP2) complex, leading to its degradation.

The protein localises to the cytoplasm. The protein resides in the cytosol. It localises to the P-body. Its subcellular location is the stress granule. It is found in the nucleus. Specifically recognizes and binds N6-methyladenosine (m6A)-containing RNAs, and regulates their stability. M6A is a modification present at internal sites of mRNAs and some non-coding RNAs and plays a role in mRNA stability and processing. Acts as a regulator of mRNA stability by promoting degradation of m6A-containing mRNAs via interaction with the CCR4-NOT and ribonuclease P/MRP complexes, depending on the context. The YTHDF paralogs (YTHDF1, YTHDF2 and YTHDF3) share m6A-containing mRNAs targets and act redundantly to mediate mRNA degradation and cellular differentiation. M6A-containing mRNAs containing a binding site for RIDA/HRSP12 (5'-GGUUC-3') are preferentially degraded by endoribonucleolytic cleavage: cooperative binding of RIDA/HRSP12 and YTHDF2 to transcripts leads to recruitment of the ribonuclease P/MRP complex. Other m6A-containing mRNAs undergo deadenylation via direct interaction between YTHDF2 and CNOT1, leading to recruitment of the CCR4-NOT and subsequent deadenylation of m6A-containing mRNAs. Required maternally to regulate oocyte maturation: probably acts by binding to m6A-containing mRNAs, thereby regulating maternal transcript dosage during oocyte maturation, which is essential for the competence of oocytes to sustain early zygotic development. Also required during spermatogenesis: regulates spermagonial adhesion by promoting degradation of m6A-containing transcripts coding for matrix metallopeptidases. Also involved in hematopoietic stem cells specification by binding to m6A-containing mRNAs, leading to promote their degradation. Also acts as a regulator of neural development by promoting m6A-dependent degradation of neural development-related mRNA targets. Inhibits neural specification of induced pluripotent stem cells by binding to methylated neural-specific mRNAs and promoting their degradation, thereby restraining neural differentiation. Regulates circadian regulation of hepatic lipid metabolism: acts by promoting m6A-dependent degradation of PPARA transcripts. Regulates the innate immune response to infection by inhibiting the type I interferon response: acts by binding to m6A-containing IFNB transcripts and promoting their degradation. May also act as a promoter of cap-independent mRNA translation following heat shock stress: upon stress, relocalizes to the nucleus and specifically binds mRNAs with some m6A methylation mark at their 5'-UTR, protecting demethylation of mRNAs by FTO, thereby promoting cap-independent mRNA translation. Regulates mitotic entry by promoting the phase-specific m6A-dependent degradation of WEE1 transcripts. Promotes formation of phase-separated membraneless compartments, such as P-bodies or stress granules, by undergoing liquid-liquid phase separation upon binding to mRNAs containing multiple m6A-modified residues: polymethylated mRNAs act as a multivalent scaffold for the binding of YTHDF proteins, juxtaposing their disordered regions and thereby leading to phase separation. The resulting mRNA-YTHDF complexes then partition into different endogenous phase-separated membraneless compartments, such as P-bodies, stress granules or neuronal RNA granules. May also recognize and bind RNAs modified by C5-methylcytosine (m5C) and act as a regulator of rRNA processing. The polypeptide is YTH domain-containing family protein 2 (Bos taurus (Bovine)).